We begin with the raw amino-acid sequence, 439 residues long: Xylose isomerase (439 aa).

Active-site residues include His101 and Asp104. Positions 232, 268, 271, 296, 307, 309, and 339 each coordinate Mg(2+).

This sequence belongs to the xylose isomerase family. Homotetramer. Mg(2+) is required as a cofactor.

Its subcellular location is the cytoplasm. It catalyses the reaction alpha-D-xylose = alpha-D-xylulofuranose. The chain is Xylose isomerase from Pseudoalteromonas atlantica (strain T6c / ATCC BAA-1087).